Consider the following 443-residue polypeptide: Porin D (443 aa).

Positions 1-23 (MKVMKWSAIALAVSAGSTQFAVA) are cleaved as a signal peptide. Active-site residues include His-179, Asp-231, and Ser-319.

It belongs to the outer membrane porin (Opr) (TC 1.B.25) family.

It localises to the cell outer membrane. In terms of biological role, porin with a specificity for basic amino acids. Involved in facilitated diffusion of carbapenem beta-lactam antibiotics, such as imipenem and meropenem. Also possesses serine protease activity. In Pseudomonas aeruginosa (strain ATCC 15692 / DSM 22644 / CIP 104116 / JCM 14847 / LMG 12228 / 1C / PRS 101 / PAO1), this protein is Porin D (oprD).